Consider the following 109-residue polypeptide: Homeobox protein E60 (109 aa).

A disordered region spans residues 1–31; sequence PRTRRVKRSDGRGNGGTPEEKRPRTAFSGEQ. A DNA-binding region (homeobox) is located at residues 20–79; the sequence is EKRPRTAFSGEQLARLKREFAENRYLTERRRQQLSRDLGLNEAQIKIWFQNKRAKIKKAS.

The protein belongs to the engrailed homeobox family.

It localises to the nucleus. The polypeptide is Homeobox protein E60 (Apis mellifera (Honeybee)).